The chain runs to 527 residues: Peptide chain release factor 3 (527 aa).

The tr-type G domain occupies 9–277; the sequence is AKRRTFAIIS…AVVDWAPRPL (269 aa). Residues 18–25, 86–90, and 140–143 each bind GTP; these read SHPDAGKT, DTPGH, and NKLD.

The protein belongs to the TRAFAC class translation factor GTPase superfamily. Classic translation factor GTPase family. PrfC subfamily.

It localises to the cytoplasm. Increases the formation of ribosomal termination complexes and stimulates activities of RF-1 and RF-2. It binds guanine nucleotides and has strong preference for UGA stop codons. It may interact directly with the ribosome. The stimulation of RF-1 and RF-2 is significantly reduced by GTP and GDP, but not by GMP. In Pseudomonas fluorescens (strain SBW25), this protein is Peptide chain release factor 3.